Reading from the N-terminus, the 418-residue chain is 3-isopropylmalate dehydratase large subunit 1 (418 aa).

Residues Cys298, Cys358, and Cys361 each coordinate [4Fe-4S] cluster.

It belongs to the aconitase/IPM isomerase family. LeuC type 2 subfamily. Heterodimer of LeuC and LeuD. It depends on [4Fe-4S] cluster as a cofactor.

It catalyses the reaction (2R,3S)-3-isopropylmalate = (2S)-2-isopropylmalate. It participates in amino-acid biosynthesis; L-leucine biosynthesis; L-leucine from 3-methyl-2-oxobutanoate: step 2/4. In terms of biological role, catalyzes the isomerization between 2-isopropylmalate and 3-isopropylmalate, via the formation of 2-isopropylmaleate. This Thermotoga maritima (strain ATCC 43589 / DSM 3109 / JCM 10099 / NBRC 100826 / MSB8) protein is 3-isopropylmalate dehydratase large subunit 1.